The primary structure comprises 267 residues: Cell division protein FtsQ (267 aa).

The Cytoplasmic portion of the chain corresponds to 1 to 32 (MRKKTSSNKKNTAKKNNNISLHRKLGLIYKKT). Residues 33–53 (ILILKIVLIIFICLFAFTKYF) traverse the membrane as a helical segment. The Periplasmic portion of the chain corresponds to 54 to 267 (ASLKSYLKTN…DKNKYYIEKY (214 aa)). In terms of domain architecture, POTRA spans 73–141 (FKLENVIIEG…STIYIKLFER (69 aa)).

Belongs to the FtsQ/DivIB family. FtsQ subfamily.

It is found in the cell inner membrane. Functionally, essential cell division protein. This chain is Cell division protein FtsQ, found in Rickettsia bellii (strain RML369-C).